The chain runs to 342 residues: Ribosomal RNA small subunit methyltransferase C (342 aa).

This sequence belongs to the methyltransferase superfamily. RsmC family. In terms of assembly, monomer.

Its subcellular location is the cytoplasm. It catalyses the reaction guanosine(1207) in 16S rRNA + S-adenosyl-L-methionine = N(2)-methylguanosine(1207) in 16S rRNA + S-adenosyl-L-homocysteine + H(+). In terms of biological role, specifically methylates the guanine in position 1207 of 16S rRNA in the 30S particle. This chain is Ribosomal RNA small subunit methyltransferase C, found in Salmonella paratyphi B (strain ATCC BAA-1250 / SPB7).